Here is an 89-residue protein sequence, read N- to C-terminus: Putative regulatory protein CPE1749 (89 aa).

The protein belongs to the RemA family.

The sequence is that of Putative regulatory protein CPE1749 from Clostridium perfringens (strain 13 / Type A).